Here is a 352-residue protein sequence, read N- to C-terminus: MPKIAVLPGDGIGQEIIPQAVRVLKAVLAETDAEFEFQDYPIGGAAIELVGKALPDETLQGCREADAVLLGAVGGHQWDHLPASERPETAALLGLRKGLNFYANIRPVRMIPSLLATSTLKENVLDGVDMVVIRELTGGVYFGEKGRSDNPRSAYDKMTYSEEEIRRILIQGFETAMLRSKKLCSVDKANVLETSRLWREIANELAKEYPEVELTHMYVDNAAMQLVRNPKQFDVIVTENMFGDILTDLASMLGGSIGMLSSASLSGTQGMYEPAHGSAPDIAGKNLANPLATILSAALMLRYSFGMEAEALRIESAVEKVLEQGYRTGDLAQAGDKVVGTIEMGDAVLAAL.

Residues R96, R106, R134, and D220 each contribute to the substrate site. D220, D244, and D248 together coordinate Mg(2+). 277–289 (GSAPDIAGKNLAN) contacts NAD(+).

Belongs to the isocitrate and isopropylmalate dehydrogenases family. LeuB type 1 subfamily. In terms of assembly, homodimer. Mg(2+) is required as a cofactor. The cofactor is Mn(2+).

Its subcellular location is the cytoplasm. It catalyses the reaction (2R,3S)-3-isopropylmalate + NAD(+) = 4-methyl-2-oxopentanoate + CO2 + NADH. It functions in the pathway amino-acid biosynthesis; L-leucine biosynthesis; L-leucine from 3-methyl-2-oxobutanoate: step 3/4. Its function is as follows. Catalyzes the oxidation of 3-carboxy-2-hydroxy-4-methylpentanoate (3-isopropylmalate) to 3-carboxy-4-methyl-2-oxopentanoate. The product decarboxylates to 4-methyl-2 oxopentanoate. The polypeptide is 3-isopropylmalate dehydrogenase (Desulfitobacterium hafniense (strain Y51)).